Reading from the N-terminus, the 788-residue chain is MNANALRVLEYDKLKELLAKQTASSLGAQFVRKMEPAEDFEQVKALLALTTEATTVYRLRDRYPFGGLTDVRSEVKRAEIGSVLSTSELLAVADVVYSGRQVKAFQERLHEDHPDLRLPALDSRIEQITKLVEIEQGIRHAIDDQGTVQDSASDKLRALRSQLRSLEGQVRSKIDGVLRNKSKMLSDAIVTMRNDRYCVPVKQEYRQAFGGIVHDQSASGATLFIEPQAVVAANNEIQEARLKERAEIERILAQLSALVGSVGDSLRINVDVLAELDFIMAKALYGHTIRAVEPRLNENRHIVLKEARHPFIPDDEVVPITVSLGGEFTSLVITGPNTGGKTVTLKTIGLLQLMVQSGLYVPAADETELSVFDAIYADIGDEQSIEQNLSTFSSHMTNIVSMMGKIDFMSLVLFDELGAGTDPTEGAALAIAILDEVKRRGARVAATTHYSELKAYGYNREGVVNASMEFDVESLSPTYRLLIGVPGRSNAFEISKRLGLEDRVIDAARDQVGTDAQSVETMIGRLEEAKQRAESLERELLQEQQRLVEEREEFEREQAEIHQEKNEILAKAEEKATRAVERAQKEAEAVIKRLKELRDAGAVKEHELIEARKQLEQAKPSLQDQRIAKVKAKTNQAPVFAKGEEVKVTTFNQKGYIINQNSNGEYTVQVGIMKVNVKPSDLAKVGEVKSASKTKKRSGGTSITKQSAASAELDLRGVRVEEGLAKLDRFMDQALLSNYEQIRVIHGLGTGAMRQGVQEYLRGNRHVKTHRLGGQGEGGHGVTIIELK.

335–342 (GPNTGGKT) lines the ATP pocket. Positions 688-708 (VKSASKTKKRSGGTSITKQSA) are disordered. The segment covering 699–708 (GGTSITKQSA) has biased composition (polar residues). In terms of domain architecture, Smr spans 713–788 (LDLRGVRVEE…GHGVTIIELK (76 aa)).

Belongs to the DNA mismatch repair MutS family. MutS2 subfamily. As to quaternary structure, homodimer. Binds to stalled ribosomes, contacting rRNA.

In terms of biological role, endonuclease that is involved in the suppression of homologous recombination and thus may have a key role in the control of bacterial genetic diversity. Its function is as follows. Acts as a ribosome collision sensor, splitting the ribosome into its 2 subunits. Detects stalled/collided 70S ribosomes which it binds and splits by an ATP-hydrolysis driven conformational change. Acts upstream of the ribosome quality control system (RQC), a ribosome-associated complex that mediates the extraction of incompletely synthesized nascent chains from stalled ribosomes and their subsequent degradation. Probably generates substrates for RQC. In Exiguobacterium sibiricum (strain DSM 17290 / CCUG 55495 / CIP 109462 / JCM 13490 / 255-15), this protein is Endonuclease MutS2.